Consider the following 382-residue polypeptide: Chorismate synthase (382 aa).

Residues Arg-39 and Arg-45 each contribute to the NADP(+) site. FMN-binding positions include 127-129 (RAS), 245-246 (QA), Gly-290, 305-309 (KPIPT), and Arg-331.

Belongs to the chorismate synthase family. As to quaternary structure, homotetramer. It depends on FMNH2 as a cofactor.

The catalysed reaction is 5-O-(1-carboxyvinyl)-3-phosphoshikimate = chorismate + phosphate. Its pathway is metabolic intermediate biosynthesis; chorismate biosynthesis; chorismate from D-erythrose 4-phosphate and phosphoenolpyruvate: step 7/7. Its function is as follows. Catalyzes the anti-1,4-elimination of the C-3 phosphate and the C-6 proR hydrogen from 5-enolpyruvylshikimate-3-phosphate (EPSP) to yield chorismate, which is the branch point compound that serves as the starting substrate for the three terminal pathways of aromatic amino acid biosynthesis. This reaction introduces a second double bond into the aromatic ring system. This Desulfitobacterium hafniense (strain DSM 10664 / DCB-2) protein is Chorismate synthase.